The sequence spans 400 residues: MGVLMSKRQTVEQVQKVSLAVSAFKDGLRDRPSIRRGGELPGSRRGTVEGSVQEVQEEKEAEASAPVVQEESSINRAAWERLRDGRGVEPEEFDRTSRFTPPAFIRPTRKLDDDKPPDICLEPREPVVNDEMCDVCEVWTAESLFPCRVCTRVFHDGCLRRMGYLQGDSAVEVTEMAHTETGWSCYYCDNLNLLLTEEEMYSLTETFQRCKVIPDCSLTLEDFVRYRHQAAKRGESSRALTDEQEEQAARQFAALDPEQRGHVEWSDFLSHESLLLLLQLRPQNSLLRLLTVKERERARATFLARGRGSTISEAECHHARHSWFCKRLTEAPSCSVSISHVGPIADSSPAASSSKSQEKALLPTEQESRYVDWPTFLRENVIYILAARPNSGAIHLKPPG.

Glycine 2 is lipidated: N-myristoyl glycine. Over residues 29–38 the composition is skewed to basic and acidic residues; sequence RDRPSIRRGG. Positions 29–65 are disordered; that stretch reads RDRPSIRRGGELPGSRRGTVEGSVQEVQEEKEAEASA. Residue arginine 36 is modified to Omega-N-methylarginine. Serine 43 carries the phosphoserine modification. Threonine 47 carries the phosphothreonine modification. Serine 51 is modified (phosphoserine). Residues 129 to 190 form a PHD-type zinc finger; the sequence is NDEMCDVCEV…TGWSCYYCDN (62 aa). Residue arginine 307 is modified to Omega-N-methylarginine.

The protein is PHD finger protein 24 of Mus musculus (Mouse).